Consider the following 385-residue polypeptide: 4-hydroxy-3-methylbut-2-en-1-yl diphosphate synthase (flavodoxin) 2 (385 aa).

[4Fe-4S] cluster is bound by residues Cys280, Cys283, Cys315, and Glu322.

Belongs to the IspG family. The cofactor is [4Fe-4S] cluster.

The enzyme catalyses (2E)-4-hydroxy-3-methylbut-2-enyl diphosphate + oxidized [flavodoxin] + H2O + 2 H(+) = 2-C-methyl-D-erythritol 2,4-cyclic diphosphate + reduced [flavodoxin]. The protein operates within isoprenoid biosynthesis; isopentenyl diphosphate biosynthesis via DXP pathway; isopentenyl diphosphate from 1-deoxy-D-xylulose 5-phosphate: step 5/6. In terms of biological role, converts 2C-methyl-D-erythritol 2,4-cyclodiphosphate (ME-2,4cPP) into 1-hydroxy-2-methyl-2-(E)-butenyl 4-diphosphate. This Streptomyces coelicolor (strain ATCC BAA-471 / A3(2) / M145) protein is 4-hydroxy-3-methylbut-2-en-1-yl diphosphate synthase (flavodoxin) 2.